We begin with the raw amino-acid sequence, 208 residues long: Thiamine-phosphate synthase (208 aa).

4-amino-2-methyl-5-(diphosphooxymethyl)pyrimidine is bound by residues 37–41 (QYREK) and Asn-73. Mg(2+) is bound by residues Asp-74 and Asp-93. Ser-112 serves as a coordination point for 4-amino-2-methyl-5-(diphosphooxymethyl)pyrimidine. 139–141 (TIS) provides a ligand contact to 2-[(2R,5Z)-2-carboxy-4-methylthiazol-5(2H)-ylidene]ethyl phosphate. Lys-142 contacts 4-amino-2-methyl-5-(diphosphooxymethyl)pyrimidine. 2-[(2R,5Z)-2-carboxy-4-methylthiazol-5(2H)-ylidene]ethyl phosphate is bound by residues Gly-171 and 191–192 (IS).

The protein belongs to the thiamine-phosphate synthase family. Mg(2+) is required as a cofactor.

It catalyses the reaction 2-[(2R,5Z)-2-carboxy-4-methylthiazol-5(2H)-ylidene]ethyl phosphate + 4-amino-2-methyl-5-(diphosphooxymethyl)pyrimidine + 2 H(+) = thiamine phosphate + CO2 + diphosphate. The enzyme catalyses 2-(2-carboxy-4-methylthiazol-5-yl)ethyl phosphate + 4-amino-2-methyl-5-(diphosphooxymethyl)pyrimidine + 2 H(+) = thiamine phosphate + CO2 + diphosphate. It carries out the reaction 4-methyl-5-(2-phosphooxyethyl)-thiazole + 4-amino-2-methyl-5-(diphosphooxymethyl)pyrimidine + H(+) = thiamine phosphate + diphosphate. The protein operates within cofactor biosynthesis; thiamine diphosphate biosynthesis; thiamine phosphate from 4-amino-2-methyl-5-diphosphomethylpyrimidine and 4-methyl-5-(2-phosphoethyl)-thiazole: step 1/1. In terms of biological role, condenses 4-methyl-5-(beta-hydroxyethyl)thiazole monophosphate (THZ-P) and 2-methyl-4-amino-5-hydroxymethyl pyrimidine pyrophosphate (HMP-PP) to form thiamine monophosphate (TMP). In Listeria welshimeri serovar 6b (strain ATCC 35897 / DSM 20650 / CCUG 15529 / CIP 8149 / NCTC 11857 / SLCC 5334 / V8), this protein is Thiamine-phosphate synthase.